A 451-amino-acid polypeptide reads, in one-letter code: Homeobox protein meis3-B (451 aa).

The disordered stretch occupies residues 33-64; the sequence is HHSLSQSTPYGSTGAAHRVPMPPGMGSNDGLK. Residues 34–43 show a composition bias toward polar residues; sequence HSLSQSTPYG. Positions 102–185 constitute an MEIS N-terminal domain; that stretch reads GGDVCSSDSF…PIDLVIDDRD (84 aa). The segment at 206–272 is disordered; the sequence is NNTWIRDHDE…RDKKRNKKRG (67 aa). The segment covering 218-230 has biased composition (low complexity); sequence STHSGTPGPSSGG. A compositionally biased stretch (polar residues) spans 231–242; it reads LASQSGDNSSEQ. The segment at residues 267–329 is a DNA-binding region (homeobox); sequence RNKKRGIFPK…NARRRIVQPM (63 aa).

This sequence belongs to the TALE/MEIS homeobox family.

The protein resides in the nucleus. In terms of biological role, a caudalizing protein which is required to pattern the anterior/posterior (A/P) axis during central nervous system (CNS) formation. Inhibits anterior neural expression and acts as a transcriptional activator to induce posterior neural gene expression. Maintains a proper A/P balance required for hindbrain formation by activating the FGF/MAPK pathway, which modulates the planar cell polarity (PCP) pathway. Interacts with retinoid signaling during hindbrain patterning. This is Homeobox protein meis3-B (meis3-b) from Xenopus laevis (African clawed frog).